The sequence spans 414 residues: EARP and GARP complex-interacting protein 1 (414 aa).

Met1 is modified (N-acetylmethionine). WD repeat units lie at residues 159-199 (TAHG…SQAV), 209-249 (KGQL…QIYC), 253-293 (AHGQ…EPVK), and 297-337 (EHSH…SEPF). Residues 337–362 (FGHLVDDDDISDQEDHRSEEKSKEPL) are disordered. Phosphoserine is present on Ser347. Residues 349-362 (QEDHRSEEKSKEPL) are compositionally biased toward basic and acidic residues. A WD 5 repeat occupies 372 to 412 (EHEDSVYAVDWSSADPWLFASLSYDGRLVINRVPRALKYHI).

The protein belongs to the WD repeat EIPR1 family. As to quaternary structure, interacts with two multisubunit tethering complexes: EARP composed of VPS50, VPS51, VPS52 and VPS53 subunits and GARP complex composed of VPS51, VPS52, VPS53 and VPS54 subunits. Interacts with SNAP29.

Its subcellular location is the golgi apparatus. It localises to the trans-Golgi network. In terms of biological role, acts as a component of endosomal retrieval machinery that is involved in protein transport from early endosomes to either recycling endosomes or the trans-Golgi network. Mediates the recruitment of Golgi-associated retrograde protein (GARP) complex to the trans-Golgi network and controls early endosome-to-Golgi transport of internalized protein. Promotes the recycling of internalized transferrin receptor (TFRC) to the plasma membrane through interaction with endosome-associated recycling protein (EARP) complex. Controls proper insulin distribution and secretion, and retention of cargo in mature dense core vesicles. Required for the stability of the endosome-associated retrograde protein (EARP) complex subunits and for proper localization and association of EARP with membranes. This chain is EARP and GARP complex-interacting protein 1, found in Pongo abelii (Sumatran orangutan).